The following is a 183-amino-acid chain: Ribosome rescue factor SmrB (183 aa).

The 76-residue stretch at 98–173 (LDLHGLTQLQ…GDAALLVLIE (76 aa)) folds into the Smr domain.

It belongs to the SmrB family. In terms of assembly, associates with collided ribosomes, but not with correctly translating polysomes.

Acts as a ribosome collision sensor. Detects stalled/collided disomes (pairs of ribosomes where the leading ribosome is stalled and a second ribosome has collided with it) and endonucleolytically cleaves mRNA at the 5' boundary of the stalled ribosome. Stalled/collided disomes form a new interface (primarily via the 30S subunits) that binds SmrB. Cleaved mRNA becomes available for tmRNA ligation, leading to ribosomal subunit dissociation and rescue of stalled ribosomes. This Shigella dysenteriae serotype 1 (strain Sd197) protein is Ribosome rescue factor SmrB.